The sequence spans 388 residues: Leucine aminopeptidase 1 (388 aa).

The signal sequence occupies residues 1–19 (MKSLSLLALAAIAPPAAVA). The propeptide occupies 20–88 (AVVDHQVPFE…SVKSHERIQV (69 aa)). An N-linked (GlcNAc...) asparagine glycan is attached at asparagine 180. Zn(2+) is bound by residues histidine 188, aspartate 207, glutamate 246, and aspartate 273. A disulfide bridge connects residues cysteine 322 and cysteine 326. Histidine 355 is a binding site for Zn(2+).

The protein belongs to the peptidase M28 family. M28E subfamily. Monomer. The cofactor is Zn(2+).

It is found in the secreted. Functionally, extracellular aminopeptidase that allows assimilation of proteinaceous substrates. The polypeptide is Leucine aminopeptidase 1 (LAP1) (Coccidioides posadasii (strain RMSCC 757 / Silveira) (Valley fever fungus)).